Consider the following 370-residue polypeptide: N-acyl-L-amino acid amidohydrolase (370 aa).

Belongs to the peptidase M20 family. Homotetramer. It depends on Co(2+) as a cofactor.

It carries out the reaction an N-acyl-L-amino acid + H2O = an L-alpha-amino acid + a carboxylate. The catalysed reaction is an N-acetyl-L-cysteine-S-conjugate + H2O = an S-substituted L-cysteine + acetate. Hydrolyzes most efficiently N-acetyl derivatives of aromatic amino acids but is also active on other amino acids. L-stereospecific. This Geobacillus stearothermophilus (Bacillus stearothermophilus) protein is N-acyl-L-amino acid amidohydrolase (amaA).